The chain runs to 540 residues: 2-isopropylmalate synthase (540 aa).

The Pyruvate carboxyltransferase domain occupies 8–273 (VLIFDTTLRD…FFGRDQDSPT (266 aa)). Residues Asp-17, His-208, His-210, and Asn-244 each coordinate Mn(2+). The segment at 408–540 (QLQLVQVSCG…AVVLDARPTL (133 aa)) is regulatory domain.

The protein belongs to the alpha-IPM synthase/homocitrate synthase family. LeuA type 1 subfamily. In terms of assembly, homodimer. It depends on Mn(2+) as a cofactor.

The protein localises to the cytoplasm. The catalysed reaction is 3-methyl-2-oxobutanoate + acetyl-CoA + H2O = (2S)-2-isopropylmalate + CoA + H(+). The protein operates within amino-acid biosynthesis; L-leucine biosynthesis; L-leucine from 3-methyl-2-oxobutanoate: step 1/4. Its function is as follows. Catalyzes the condensation of the acetyl group of acetyl-CoA with 3-methyl-2-oxobutanoate (2-ketoisovalerate) to form 3-carboxy-3-hydroxy-4-methylpentanoate (2-isopropylmalate). The sequence is that of 2-isopropylmalate synthase from Parasynechococcus marenigrum (strain WH8102).